A 548-amino-acid polypeptide reads, in one-letter code: Chaperonin GroEL (548 aa).

ATP-binding positions include 30–33 (TLGP), Lys51, 87–91 (DGTTT), Gly415, 478–480 (NAA), and Asp494.

Belongs to the chaperonin (HSP60) family. As to quaternary structure, forms a cylinder of 14 subunits composed of two heptameric rings stacked back-to-back. Interacts with the co-chaperonin GroES.

The protein resides in the cytoplasm. The enzyme catalyses ATP + H2O + a folded polypeptide = ADP + phosphate + an unfolded polypeptide.. In terms of biological role, together with its co-chaperonin GroES, plays an essential role in assisting protein folding. The GroEL-GroES system forms a nano-cage that allows encapsulation of the non-native substrate proteins and provides a physical environment optimized to promote and accelerate protein folding. In Trichlorobacter lovleyi (strain ATCC BAA-1151 / DSM 17278 / SZ) (Geobacter lovleyi), this protein is Chaperonin GroEL.